Here is a 222-residue protein sequence, read N- to C-terminus: Phosphoribosylformylglycinamidine synthase subunit PurQ (222 aa).

One can recognise a Glutamine amidotransferase type-1 domain in the interval 3-222 (AAVLVFPGSN…ASLAAALVAA (220 aa)). The Nucleophile role is filled by C86. Active-site residues include H194 and E196.

In terms of assembly, part of the FGAM synthase complex composed of 1 PurL, 1 PurQ and 2 PurS subunits.

It localises to the cytoplasm. The catalysed reaction is N(2)-formyl-N(1)-(5-phospho-beta-D-ribosyl)glycinamide + L-glutamine + ATP + H2O = 2-formamido-N(1)-(5-O-phospho-beta-D-ribosyl)acetamidine + L-glutamate + ADP + phosphate + H(+). The enzyme catalyses L-glutamine + H2O = L-glutamate + NH4(+). It functions in the pathway purine metabolism; IMP biosynthesis via de novo pathway; 5-amino-1-(5-phospho-D-ribosyl)imidazole from N(2)-formyl-N(1)-(5-phospho-D-ribosyl)glycinamide: step 1/2. In terms of biological role, part of the phosphoribosylformylglycinamidine synthase complex involved in the purines biosynthetic pathway. Catalyzes the ATP-dependent conversion of formylglycinamide ribonucleotide (FGAR) and glutamine to yield formylglycinamidine ribonucleotide (FGAM) and glutamate. The FGAM synthase complex is composed of three subunits. PurQ produces an ammonia molecule by converting glutamine to glutamate. PurL transfers the ammonia molecule to FGAR to form FGAM in an ATP-dependent manner. PurS interacts with PurQ and PurL and is thought to assist in the transfer of the ammonia molecule from PurQ to PurL. This chain is Phosphoribosylformylglycinamidine synthase subunit PurQ, found in Jannaschia sp. (strain CCS1).